The following is a 733-amino-acid chain: Oligopeptide transporter 8 (733 aa).

14 helical membrane passes run 42–62, 66–86, 115–135, 147–167, 209–229, 244–264, 281–301, 357–377, 413–433, 442–462, 531–551, 596–616, 644–664, and 677–697; these read MWVLGITACVLLSFLNQFFWY, PLTISSVSAQIAVVPIGHLMA, VLITVFANSGSGAVYATHILS, FLPALLVMITTQVLGFGWAGL, FFVITLITSFSYYLLPGYLFT, SILVNQLGSGSAGLGIGSFGL, FFASANIAAGFFLVMYVITPL, FAVTYGLGFATLSASIFHVLI, LWWFLSIFAVNLAVIVFICIY, WWGAFLACLIAIFFTPLVGVI, VGTLVAVIAYAGTAWWLMAEI, YSNINWFFVGGAIAPALVYLA, ASAVNFTSWLVMAFVFGHFVF, and VLSGGMDAGTGFMSVLLFLAL.

Belongs to the oligopeptide OPT transporter (TC 2.A.67.1) family.

The protein localises to the membrane. May be involved in the translocation of tetra- and pentapeptides across the cellular membrane in an energy-dependent manner. In Arabidopsis thaliana (Mouse-ear cress), this protein is Oligopeptide transporter 8 (OPT8).